Reading from the N-terminus, the 1009-residue chain is Epididymis-specific alpha-mannosidase (1009 aa).

An N-terminal signal peptide occupies residues 1–23 (MGQLCWLPLLAPLLLLRPPGVQS). Zn(2+) is bound by residues His36, Asp38, and Asp151. Catalysis depends on Asp151, which acts as the Nucleophile. Asn226, Asn249, Asn294, and Asn336 each carry an N-linked (GlcNAc...) asparagine glycan. His420 serves as a coordination point for Zn(2+). N-linked (GlcNAc...) asparagine glycans are attached at residues Asn516, Asn608, Asn670, Asn675, Asn748, Asn808, Asn812, and Asn890. The tract at residues 972 to 991 (GPGRHRGDTTSPSRPPGGPI) is disordered.

It belongs to the glycosyl hydrolase 38 family. It depends on Zn(2+) as a cofactor.

It localises to the secreted. The enzyme catalyses Hydrolysis of terminal, non-reducing alpha-D-mannose residues in alpha-D-mannosides.. This chain is Epididymis-specific alpha-mannosidase (MAN2B2), found in Homo sapiens (Human).